Reading from the N-terminus, the 420-residue chain is Serine--tRNA ligase (420 aa).

229–231 contributes to the L-serine binding site; that stretch reads TAE. 260 to 262 is a binding site for ATP; the sequence is RAE. Residue E283 coordinates L-serine. 347 to 350 contacts ATP; that stretch reads EISS. An L-serine-binding site is contributed by S382.

Belongs to the class-II aminoacyl-tRNA synthetase family. Type-1 seryl-tRNA synthetase subfamily. Homodimer. The tRNA molecule binds across the dimer.

It is found in the cytoplasm. The catalysed reaction is tRNA(Ser) + L-serine + ATP = L-seryl-tRNA(Ser) + AMP + diphosphate + H(+). It catalyses the reaction tRNA(Sec) + L-serine + ATP = L-seryl-tRNA(Sec) + AMP + diphosphate + H(+). It participates in aminoacyl-tRNA biosynthesis; selenocysteinyl-tRNA(Sec) biosynthesis; L-seryl-tRNA(Sec) from L-serine and tRNA(Sec): step 1/1. In terms of biological role, catalyzes the attachment of serine to tRNA(Ser). Is also able to aminoacylate tRNA(Sec) with serine, to form the misacylated tRNA L-seryl-tRNA(Sec), which will be further converted into selenocysteinyl-tRNA(Sec). In Caldicellulosiruptor bescii (strain ATCC BAA-1888 / DSM 6725 / KCTC 15123 / Z-1320) (Anaerocellum thermophilum), this protein is Serine--tRNA ligase.